Consider the following 327-residue polypeptide: Undecaprenyl-phosphate 4-deoxy-4-formamido-L-arabinose transferase (327 aa).

2 helical membrane-spanning segments follow: residues 235 to 255 (LLSLVGSAIALLGFTFSVLLV) and 270 to 290 (VFTLFAVLFMFIGAQFVGMGL).

It belongs to the glycosyltransferase 2 family.

The protein resides in the cell inner membrane. The catalysed reaction is UDP-4-deoxy-4-formamido-beta-L-arabinose + di-trans,octa-cis-undecaprenyl phosphate = 4-deoxy-4-formamido-alpha-L-arabinopyranosyl di-trans,octa-cis-undecaprenyl phosphate + UDP. It functions in the pathway glycolipid biosynthesis; 4-amino-4-deoxy-alpha-L-arabinose undecaprenyl phosphate biosynthesis; 4-amino-4-deoxy-alpha-L-arabinose undecaprenyl phosphate from UDP-4-deoxy-4-formamido-beta-L-arabinose and undecaprenyl phosphate: step 1/2. It participates in bacterial outer membrane biogenesis; lipopolysaccharide biosynthesis. Catalyzes the transfer of 4-deoxy-4-formamido-L-arabinose from UDP to undecaprenyl phosphate. The modified arabinose is attached to lipid A and is required for resistance to polymyxin and cationic antimicrobial peptides. In Yersinia pestis bv. Antiqua (strain Antiqua), this protein is Undecaprenyl-phosphate 4-deoxy-4-formamido-L-arabinose transferase.